Here is an 809-residue protein sequence, read N- to C-terminus: PiggyBac transposable element-derived protein 1 (809 aa).

The region spanning 44-126 (RLRFRHFCYQ…TVLENLETGS (83 aa)) is the SCAN box domain. A disordered region spans residues 170-199 (CEPPQRPQGNPQEVSGPVPHGSAHLQEKNP). Lys218 is covalently cross-linked (Glycyl lysine isopeptide (Lys-Gly) (interchain with G-Cter in SUMO2)). The tract at residues 271–297 (KQETSEEMEQSGEASGKPNRECAPQIP) is disordered. Residue Ser360 is modified to Phosphoserine.

The chain is PiggyBac transposable element-derived protein 1 (PGBD1) from Homo sapiens (Human).